The primary structure comprises 549 residues: Glucose-6-phosphate isomerase (549 aa).

Catalysis depends on Glu-355, which acts as the Proton donor. Catalysis depends on residues His-386 and Lys-514.

This sequence belongs to the GPI family.

Its subcellular location is the cytoplasm. It catalyses the reaction alpha-D-glucose 6-phosphate = beta-D-fructose 6-phosphate. It participates in carbohydrate biosynthesis; gluconeogenesis. Its pathway is carbohydrate degradation; glycolysis; D-glyceraldehyde 3-phosphate and glycerone phosphate from D-glucose: step 2/4. Functionally, catalyzes the reversible isomerization of glucose-6-phosphate to fructose-6-phosphate. The sequence is that of Glucose-6-phosphate isomerase from Buchnera aphidicola subsp. Acyrthosiphon pisum (strain APS) (Acyrthosiphon pisum symbiotic bacterium).